A 277-amino-acid chain; its full sequence is Shikimate dehydrogenase (NADP(+)) (277 aa).

Shikimate contacts are provided by residues 15–17 (SLS) and Thr62. Lys66 functions as the Proton acceptor in the catalytic mechanism. Shikimate contacts are provided by Asn87 and Asp102. Residues 127–131 (GAGGA), 151–156 (NRTVDK), and Ile219 contribute to the NADP(+) site. Position 221 (Tyr221) interacts with shikimate. Gly242 contacts NADP(+).

It belongs to the shikimate dehydrogenase family. In terms of assembly, homodimer.

The catalysed reaction is shikimate + NADP(+) = 3-dehydroshikimate + NADPH + H(+). The protein operates within metabolic intermediate biosynthesis; chorismate biosynthesis; chorismate from D-erythrose 4-phosphate and phosphoenolpyruvate: step 4/7. In terms of biological role, involved in the biosynthesis of the chorismate, which leads to the biosynthesis of aromatic amino acids. Catalyzes the reversible NADPH linked reduction of 3-dehydroshikimate (DHSA) to yield shikimate (SA). This chain is Shikimate dehydrogenase (NADP(+)), found in Bacillus cereus (strain ATCC 10987 / NRS 248).